Consider the following 107-residue polypeptide: MSITLSDSAAARVNSFLANRGKGFGLRLGVRTSGCSGMAYVLEFVDEPAAEDTVFEDKGVKVVIDGKSLQFLDGTQLDFVKEGLNEGFKFTNPNVKDECGCGESFNV.

Positions 35, 99, and 101 each coordinate Fe cation.

The protein belongs to the HesB/IscA family. Homodimer; may form tetramers and higher multimers. The cofactor is Fe cation.

Functionally, is able to transfer iron-sulfur clusters to apo-ferredoxin. Multiple cycles of [2Fe2S] cluster formation and transfer are observed, suggesting that IscA acts catalytically. Recruits intracellular free iron so as to provide iron for the assembly of transient iron-sulfur cluster in IscU in the presence of IscS, L-cysteine and the thioredoxin reductase system TrxA/TrxB. The polypeptide is Iron-binding protein IscA (Klebsiella pneumoniae (strain 342)).